Consider the following 414-residue polypeptide: Gamma-glutamyl phosphate reductase (414 aa).

This sequence belongs to the gamma-glutamyl phosphate reductase family.

It localises to the cytoplasm. It carries out the reaction L-glutamate 5-semialdehyde + phosphate + NADP(+) = L-glutamyl 5-phosphate + NADPH + H(+). It functions in the pathway amino-acid biosynthesis; L-proline biosynthesis; L-glutamate 5-semialdehyde from L-glutamate: step 2/2. Functionally, catalyzes the NADPH-dependent reduction of L-glutamate 5-phosphate into L-glutamate 5-semialdehyde and phosphate. The product spontaneously undergoes cyclization to form 1-pyrroline-5-carboxylate. The sequence is that of Gamma-glutamyl phosphate reductase from Francisella philomiragia subsp. philomiragia (strain ATCC 25017 / CCUG 19701 / FSC 153 / O#319-036).